Reading from the N-terminus, the 363-residue chain is Protein EXORDIUM-like 5 (363 aa).

The first 25 residues, Met-1–Ser-25, serve as a signal peptide directing secretion. N-linked (GlcNAc...) asparagine glycosylation occurs at Asn-144.

It belongs to the EXORDIUM family.

Its subcellular location is the secreted. It localises to the extracellular space. The protein localises to the apoplast. In terms of biological role, may play a role in a brassinosteroid-dependent regulation of growth and development. The sequence is that of Protein EXORDIUM-like 5 (EXL5) from Arabidopsis thaliana (Mouse-ear cress).